The primary structure comprises 146 residues: Leghemoglobin (146 aa).

Residues 3-146 (AFTEKQEALV…FAAGIKKAYA (144 aa)) form the Globin domain. Tyrosine 26 and tyrosine 31 each carry nitrated tyrosine. Residue serine 46 coordinates heme b. Serine 46 is subject to Phosphoserine. Histidine 62 serves as a coordination point for O2. Heme b-binding residues include histidine 93 and lysine 96. Tyrosine 134 carries the nitrated tyrosine modification.

This sequence belongs to the plant globin family. Monomer. Nitrated mainly at Tyr-31 and, to a lower extent, at Tyr-26 and Tyr-134, in effective nodules and particularly in hypoxic conditions; this mechanism may play a protective role in the symbiosis by buffering toxic peroxynitrite NO(2)(-). Nitration level decrease during nodule senescence. In terms of processing, phosphorylation at Ser-46 disrupts the molecular environment of its porphyrin ring oxygen binding pocket, thus leading to a reduced oxygen consumption and to the delivery of oxygen O(2) to symbiosomes. Root nodules.

The protein localises to the cytoplasm. The protein resides in the cytosol. Its subcellular location is the nucleus. Leghemoglobin that reversibly binds oxygen O(2) through a pentacoordinated heme iron. In root nodules, facilitates the diffusion of oxygen to the bacteroids while preventing the bacterial nitrogenase from being inactivated by buffering dioxygen, nitric oxide and carbon monoxide, and promoting the formation of reactive oxygen species (ROS, e.g. H(2)O(2)). This role is essential for symbiotic nitrogen fixation (SNF). The protein is Leghemoglobin of Phaseolus vulgaris (Kidney bean).